Here is a 365-residue protein sequence, read N- to C-terminus: UPF0324 membrane protein Cj0999c (365 aa).

Helical transmembrane passes span 12–34 (IVRSNFKGLLFTACIVIFAMYLS), 44–63 (HLAATAFAIIIGVLLSPWFF), 83–100 (LGIVLYGFNITLTELLSV), 105–127 (FLLSAIVIFFVFIIALFVGTKIF), 134–153 (SMLVGAGSAICGAAAVLALE), 163–185 (GILAVGTVVIFGLVFMFLYPIAF), 197–219 (AMGVFMGATLHEVANVAGAAEMA), 234–256 (VIIKMMRVILLVPFLLIVTYFFA), 269–288 (SITIPYFAFAFLGMIVLNTY), 303–325 (IISLGKTLCTLCIVFAMAALGLQ), and 338–360 (VFGLAFVLGLVLIFGGYFLTLAF).

The protein belongs to the UPF0324 family.

It localises to the cell membrane. This is UPF0324 membrane protein Cj0999c from Campylobacter jejuni subsp. jejuni serotype O:2 (strain ATCC 700819 / NCTC 11168).